The primary structure comprises 200 residues: GTP cyclohydrolase-2 (200 aa).

49–53 contributes to the GTP binding site; it reads RVHSE. Residues Cys54, Cys65, and Cys67 each coordinate Zn(2+). GTP contacts are provided by residues Gln70, 92 to 94, and Thr114; that span reads EGR. Asp126 serves as the catalytic Proton acceptor. Arg128 acts as the Nucleophile in catalysis. GTP is bound by residues Thr149 and Lys154.

It belongs to the GTP cyclohydrolase II family. Homodimer. Zn(2+) serves as cofactor.

It catalyses the reaction GTP + 4 H2O = 2,5-diamino-6-hydroxy-4-(5-phosphoribosylamino)-pyrimidine + formate + 2 phosphate + 3 H(+). It participates in cofactor biosynthesis; riboflavin biosynthesis; 5-amino-6-(D-ribitylamino)uracil from GTP: step 1/4. Catalyzes the conversion of GTP to 2,5-diamino-6-ribosylamino-4(3H)-pyrimidinone 5'-phosphate (DARP), formate and pyrophosphate. The chain is GTP cyclohydrolase-2 from Klebsiella pneumoniae (strain 342).